The following is a 234-amino-acid chain: Phosphatidylcholine synthase (234 aa).

The Cytoplasmic portion of the chain corresponds to 1–3 (MKN). Residues 4–24 (INLILAWLVHIFTASGLIVGL) form a helical membrane-spanning segment. Over 25–26 (YS) the chain is Periplasmic. The helical transmembrane segment at 27–47 (IISIVNGNYSLLLKLTVIGLI) threads the bilayer. Residues 48–75 (IDGIDGTMARKLKVKELIPEIDGTLLDN) are Cytoplasmic-facing. Residues 76 to 96 (ITDYINYTFIPVIFFYLGEFI) traverse the membrane as a helical segment. Residues 97-98 (EE) lie on the Periplasmic side of the membrane. The helical transmembrane segment at 99–116 (KYKVAICIGILLSSAYQF) threads the bilayer. The Cytoplasmic portion of the chain corresponds to 117–126 (SRTDAKTNDN). The helical transmembrane segment at 127-147 (YFRGFPSLWNLFVILNIIFKM) threads the bilayer. Residues 148–149 (EQ) are Periplasmic-facing. Residues 150 to 170 (ITNLITMSICIITSFIPIKFI) form a helical membrane-spanning segment. At 171–180 (YPSKTKELRK) the chain is on the cytoplasmic side. A helical membrane pass occupies residues 181–201 (ITIPITIISCLIFVVSIFSEL). Over 202-207 (STTALK) the chain is Periplasmic. A helical transmembrane segment spans residues 208–228 (MAKTVLILYFAYLTLASIYLT). Residues 229 to 234 (YKTRNR) are Cytoplasmic-facing.

It belongs to the CDP-alcohol phosphatidyltransferase class-I family. The cofactor is Mn(2+).

The protein resides in the cell inner membrane. It carries out the reaction a CDP-1,2-diacyl-sn-glycerol + choline = a 1,2-diacyl-sn-glycero-3-phosphocholine + CMP + H(+). Functionally, condenses choline with CDP-diglyceride to produce phosphatidylcholine and CMP. This chain is Phosphatidylcholine synthase, found in Borreliella burgdorferi (strain ATCC 35210 / DSM 4680 / CIP 102532 / B31) (Borrelia burgdorferi).